A 1397-amino-acid polypeptide reads, in one-letter code: Ankyrin repeat domain-containing protein 30A (1397 aa).

ANK repeat units follow at residues 72-101 (QKRT…QLDV), 105-134 (EHRT…DINL), 138-167 (YGNT…VIEV), 171-200 (ASLT…NANA), 204-233 (YKCT…DVFA), and 237-271 (CGVT…HQNT). Residues 267 to 279 (NHQNTNPEGTSAG) show a composition bias toward polar residues. Disordered regions lie at residues 267–376 (NHQN…TWPA), 453–482 (PTKE…EYSC), 782–807 (QTLR…WDSE), and 902–931 (TLRA…LRET). Basic and acidic residues-rich tracts occupy residues 290–304 (RTPD…KTPD) and 312–326 (RTPD…KTPD). Residues 455–467 (KESSTKASANDQR) are compositionally biased toward polar residues. 2 stretches are compositionally biased toward basic and acidic residues: residues 782–800 (QTLR…KDYE) and 913–931 (SKQK…LRET). Coiled coils occupy residues 998–1188 (VLKK…KQDK) and 1282–1327 (EHAQ…FQLQ).

As to expression, mainly expressed in breast and testis. A very faint signal is detected in placenta. Also expressed in many breast cancer cells.

The protein is Ankyrin repeat domain-containing protein 30A (ANKRD30A) of Homo sapiens (Human).